A 110-amino-acid polypeptide reads, in one-letter code: UPF0122 protein lmo1802 (110 aa).

It belongs to the UPF0122 family.

Its function is as follows. Might take part in the signal recognition particle (SRP) pathway. This is inferred from the conservation of its genetic proximity to ftsY/ffh. May be a regulatory protein. This is UPF0122 protein lmo1802 from Listeria monocytogenes serovar 1/2a (strain ATCC BAA-679 / EGD-e).